A 1343-amino-acid polypeptide reads, in one-letter code: MLLNGKSFKIYDYDTQRTVIERIASVLRTIPKYLWYVNDAGNTKYTEEPNFIEETPNSITVINVILDIETQLLQSLSEFESRYSDWFIQSGNTGNSTEEESKEDLLKWFVIDFIRKNKNEGISEEHSILLLEEELKEGVGGREFDLNFPKKIWSDRSQIEKDYNKNVKENRTLSAQNEKRFKDLDKMPKASEEFSKFVVEKIKVSFTVTNYQTSMLSLFNIIDINKVEDSENSLFRIVTVTTANFFKINGLIDISEYKRIDPSQLIENSSSCIDNVLNIIIMNEPKQKREGKQSKRPEFIDITVKPNNESLLIEFDLSISIYNSEEDRNILKNYLIETLFPQNLGENLGENLGENLGGSQSLTPRFPEGKRRSQFPELKVGPTLENKVKGSYYIINRYFQKEIFLDMIMNDPDFSILYVDERFKVSKQQSRLYVYFVTTKTGVVAFSLLNQVILTENDPLFKIKTPDGKKLKVKVGTQYIKIRISSIENKLNIPFFQDHLNRLFSLYFKKYNSILQFYNLYIKITPGGLGIQDQQDINLNIDEPRINVPPRKKIGENTLAAQVPELFLPLYSRKCARAPRIVSEEEALELNQNNFQTIRFPIHSEGNLEPKIYACDHHKEHPYPGLKPNDLANKDTFKYLPCCYKTNPEHKRGSPYGNYYKGEALTKDMTDHELYKTPRIVPNKVFGILPTSIAKIFGKISQREIDEENDTTNYYRYGTMYGINSFIDAVARAIGNNQFENIYNERQTYISEIRKKMASESYIGLSRQETYDLNIEVVKKWIKSDQYFDPKRFLKIVEDYFDVTIFLFERNVGESIISKQEDDNFTITIDQISETVQKYGSGGQLSLPIHSTIGSYILRPLKNNIVFIYIHMGSEVDKVLYPQCETIIKYVTEQEPGRKKGTVKSLFHKHDHEVEVIKTLFDKLLLSYTSIMSGPNIPFTYEPINMILKDGYGLVLKEQFIDKSGKTRMLYASWVPKSSKTTLKEMLNEPAYFTIVTEPIHPLRLPIKQNKNKNENENLCIPLTDFHSLKTPIANHFEISPITNALVDDLMKIYNLNYKKASFKDYLCNASDYLKGQINGIKVRIYVSNSIEEMRRNDSTLLKYNKQRKISRILFEYVLYKFSQYIKSHNEYSKKEIFETFLLEKCLVDNSFIYKINQNFNVPFFTLFDNMFMVDSKIIFSSQNLMIRIMYNIYQLTVRKFNKVKELSNQTIMNTYFENLSDFNHNDNFFIVYGLNTFLRFVSETKQGELLLNTLQPFDGPRFFSSDDIEDGKIFSAFCYGSIDTAISNQLSDKDIDKTENGIIYIFDTINGYKAYQINYKGVKIVAFKVEDGDYYLTLKKTI.

A helical transmembrane segment spans residues 432 to 449 (LYVYFVTTKTGVVAFSLL).

This sequence belongs to the IIV-6 295L family.

It is found in the membrane. This is an uncharacterized protein from Acheta domesticus (House cricket).